The following is a 292-amino-acid chain: Protein rogdi homolog (292 aa).

The segment covering 1-12 has biased composition (polar residues); sequence MEVQSLTITTNY. The interval 1-25 is disordered; the sequence is MEVQSLTITTNYPPKPASPNPQDIR.

It belongs to the rogdi family.

It localises to the nucleus envelope. The polypeptide is Protein rogdi homolog (Caenorhabditis elegans).